Here is a 67-residue protein sequence, read N- to C-terminus: Bombesin (67 aa).

An N-terminal signal peptide occupies residues Met1–Val30. Residues Asp31 to Ala49 constitute a propeptide that is removed on maturation. A Pyrrolidone carboxylic acid modification is found at Gln50. Residue Met64 is modified to Methionine amide.

This sequence belongs to the bombesin/neuromedin-B/ranatensin family. In terms of tissue distribution, expressed by the skin dorsal glands.

It is found in the secreted. Its function is as follows. Stimulates smooth muscle contraction in isolated rat stomach strip. The chain is Bombesin from Sanguirana varians (Palawan frog).